A 452-amino-acid chain; its full sequence is tRNA modification GTPase MnmE (452 aa).

(6S)-5-formyl-5,6,7,8-tetrahydrofolate contacts are provided by Arg-24, Glu-81, and Arg-120. Residues 216-373 enclose the TrmE-type G domain; that stretch reads GIKTVIVGAP…LFGAIGRWAD (158 aa). Residues 226-231, 245-251, and 270-273 each bind GTP; these read NVGKSS, SAEPGTT, and DTAG. Residues Ser-230 and Thr-251 each coordinate Mg(2+). Lys-452 serves as a coordination point for (6S)-5-formyl-5,6,7,8-tetrahydrofolate.

The protein belongs to the TRAFAC class TrmE-Era-EngA-EngB-Septin-like GTPase superfamily. TrmE GTPase family. In terms of assembly, homodimer. Heterotetramer of two MnmE and two MnmG subunits. K(+) serves as cofactor.

The protein resides in the cytoplasm. Functionally, exhibits a very high intrinsic GTPase hydrolysis rate. Involved in the addition of a carboxymethylaminomethyl (cmnm) group at the wobble position (U34) of certain tRNAs, forming tRNA-cmnm(5)s(2)U34. This Opitutus terrae (strain DSM 11246 / JCM 15787 / PB90-1) protein is tRNA modification GTPase MnmE.